Here is a 358-residue protein sequence, read N- to C-terminus: Phospho-N-acetylmuramoyl-pentapeptide-transferase (358 aa).

10 helical membrane-spanning segments follow: residues 26 to 46 (TIYA…WIIR), 71 to 91 (TPTM…LLWA), 93 to 113 (LTNV…LIGF), 134 to 154 (MFWQ…TPGF), 170 to 190 (LGIF…NAVN), 197 to 217 (GLAI…AYVA), 234 to 254 (AGEL…FLWF), 261 to 281 (VFMG…IAVL), 286 to 306 (ILLV…IFQV), and 335 to 355 (KIIV…ISTL).

This sequence belongs to the glycosyltransferase 4 family. MraY subfamily. Requires Mg(2+) as cofactor.

It is found in the cell inner membrane. The enzyme catalyses UDP-N-acetyl-alpha-D-muramoyl-L-alanyl-gamma-D-glutamyl-meso-2,6-diaminopimeloyl-D-alanyl-D-alanine + di-trans,octa-cis-undecaprenyl phosphate = di-trans,octa-cis-undecaprenyl diphospho-N-acetyl-alpha-D-muramoyl-L-alanyl-D-glutamyl-meso-2,6-diaminopimeloyl-D-alanyl-D-alanine + UMP. The protein operates within cell wall biogenesis; peptidoglycan biosynthesis. In terms of biological role, catalyzes the initial step of the lipid cycle reactions in the biosynthesis of the cell wall peptidoglycan: transfers peptidoglycan precursor phospho-MurNAc-pentapeptide from UDP-MurNAc-pentapeptide onto the lipid carrier undecaprenyl phosphate, yielding undecaprenyl-pyrophosphoryl-MurNAc-pentapeptide, known as lipid I. This is Phospho-N-acetylmuramoyl-pentapeptide-transferase from Trichlorobacter lovleyi (strain ATCC BAA-1151 / DSM 17278 / SZ) (Geobacter lovleyi).